A 290-amino-acid chain; its full sequence is Inositol monophosphatase 2 (290 aa).

Mg(2+) contacts are provided by glutamate 83, aspartate 103, isoleucine 105, and aspartate 106. Position 83 (glutamate 83) interacts with substrate. Residues 105-108 (IDGT), 207-209 (GSS), glutamine 226, and aspartate 233 contribute to the substrate site. Aspartate 233 lines the Mg(2+) pocket.

Belongs to the inositol monophosphatase superfamily. In terms of assembly, homodimer. Requires Mg(2+) as cofactor. In terms of tissue distribution, mostly expressed in brain, small intestine, heart, kidney, and spleen (at protein level).

Its subcellular location is the cytoplasm. The enzyme catalyses a myo-inositol phosphate + H2O = myo-inositol + phosphate. It carries out the reaction 1D-myo-inositol 1-phosphate + H2O = myo-inositol + phosphate. The catalysed reaction is 1D-myo-inositol 2-phosphate + H2O = myo-inositol + phosphate. It catalyses the reaction 1D-myo-inositol 3-phosphate + H2O = myo-inositol + phosphate. The enzyme catalyses 1D-myo-inositol 4-phosphate + H2O = myo-inositol + phosphate. It carries out the reaction 1D-myo-inositol 5-phosphate + H2O = myo-inositol + phosphate. The catalysed reaction is 1D-myo-inositol 6-phosphate + H2O = myo-inositol + phosphate. It catalyses the reaction alpha-D-glucose 1-phosphate + H2O = D-glucose + phosphate. The enzyme catalyses glycerol 2-phosphate + H2O = glycerol + phosphate. It carries out the reaction adenosine 2'-phosphate + H2O = adenosine + phosphate. It functions in the pathway polyol metabolism; myo-inositol biosynthesis; myo-inositol from D-glucose 6-phosphate: step 2/2. Functionally, phosphatase that can use myo-inositol monophosphates, myo-inositol 1,4-diphosphate, scyllo-inositol-1,4-diphosphate, glucose-1-phosphate, beta-glycerophosphate and 2'-AMP as substrates in vitro. No physiological substrates has been described yet. Has been implicated as the pharmacological target for lithium Li(+) action in brain. The sequence is that of Inositol monophosphatase 2 from Mus musculus (Mouse).